We begin with the raw amino-acid sequence, 305 residues long: Thyroxine 5-deiodinase (305 aa).

Residues 1 to 43 (MPGQAGRRRLVGGGCRGSQGPLGGAATMLRSLLLHSLRLCAQT) are Cytoplasmic-facing. A helical; Signal-anchor for type II membrane protein transmembrane segment spans residues 44–63 (ASCLVLFPRFLGTACMLWLL). The Extracellular segment spans residues 64-305 (DFLCIRKHLL…QLHGPQPRRV (242 aa)). The interval 79-98 (GEPETEVELNSDGDEVPPDD) is disordered. Residues 82 to 96 (ETEVELNSDGDEVPP) are compositionally biased toward acidic residues. Residue selenocysteine 171 is part of the active site. Position 171 (selenocysteine 171) is a non-standard amino acid, selenocysteine.

This sequence belongs to the iodothyronine deiodinase family. Monomer. Homodimer. May undergo minor heretodimerization with DIO1 and DIO2. As to expression, expressed in brain only.

It is found in the cell membrane. The protein resides in the endosome membrane. It carries out the reaction 3,3',5'-triiodo-L-thyronine + iodide + A + H(+) = L-thyroxine + AH2. The catalysed reaction is 3,3'-diiodo-L-thyronine + iodide + A + H(+) = 3,3',5-triiodo-L-thyronine + AH2. The enzyme catalyses 3-iodo-L-thyronine + iodide + A + H(+) = 3,5-diiodo-L-thyronine + AH2. It catalyses the reaction L-thyronine + iodide + A + H(+) = 3-iodo-L-thyronine + AH2. It carries out the reaction 3',5'-diiodo-L-thyronine + iodide + A + H(+) = 3,3',5'-triiodo-L-thyronine + AH2. The catalysed reaction is 3'-iodo-L-thyronine + iodide + A + H(+) = 3,3'-diiodo-L-thyronine + AH2. The enzyme catalyses 3,3',5'-triiodothyronamine + iodide + A + H(+) = 3,3',5,5'-tetraiodothyronamine + AH2. It catalyses the reaction 3',5'-diiodothyronamine + iodide + A + H(+) = 3,3',5'-triiodothyronamine + AH2. It carries out the reaction 3,3'-diiodothyronamine + iodide + A + H(+) = 3,3',5-triiodothyronamine + AH2. The catalysed reaction is 3-iodothyronamine + iodide + A + H(+) = 3,5-diiodothyronamine + AH2. The enzyme catalyses 3'-iodothyronamine + iodide + A + H(+) = 3,3'-diiodothyronamine + AH2. It catalyses the reaction thyronamine + iodide + A + H(+) = 3-iodothyronamine + AH2. In terms of biological role, plays a crucial role in the metabolism of thyroid hormones (TH) and has specific roles in TH activation and inactivation by deiodination, particularly in different tissues. Catalyzes the deiodination of L-thyroxine (T4) to 3,3',5'-triiodothyronine (rT3), 3,5-diiodothyronine (3,5-T2) to 3-monoiodothyronine (3-T1), rT3 to 3',5'-diiodothyronine (3',5'-T2) and 3,3'-diiodothyronine (3,3'-T2) to 3'-monoiodothyronine (3'-T1) via inner-ring deiodination (IRD). Catalyzes the deiodination of 3,5,3'-triiodothyronine (T3) to 3,3'-diiodothyronine (3,3'-T2) via IRD. Catalyzes the deiodination of 3-T1 to L-thyronine (T0) via outer-ring deiodination (ORD). Catalyzes the tyrosyl ring deiodinations of 3,3',5,5'-tetraiodothyronamine, 3,3',5'-triiodothyronamine, 3,5,3'-triiodothyronamine, 3,5-diiodothyronamine, 3,3'-diiodothyronamine and 3-iodothyronamine. This is Thyroxine 5-deiodinase (DIO3) from Sus scrofa (Pig).